The primary structure comprises 184 residues: MYKHPDEEWLDEIPGQQENEDDDEIIWVSKSEIKRDAEALKALGAELVDLGKNALDRIPLDEDLRAAIELAQRIKKEGRRRQLQLIGKLLRQRDPEPIQTALDKLKNRHNQQVALFHKLEQLRDRLISDGDEAISEVLNLYPHADRQQLRALIRNAKKERDGNKPPKSARQIFQYLRTLAEAND.

Residues 1–21 are disordered; it reads MYKHPDEEWLDEIPGQQENED.

It belongs to the DarP family.

It localises to the cytoplasm. Member of a network of 50S ribosomal subunit biogenesis factors which assembles along the 30S-50S interface, preventing incorrect 23S rRNA structures from forming. Promotes peptidyl transferase center (PTC) maturation. The chain is Dual-action ribosomal maturation protein DarP from Edwardsiella ictaluri (strain 93-146).